We begin with the raw amino-acid sequence, 481 residues long: ADAMTS-like protein 5 (481 aa).

Positions 1-42 are cleaved as a signal peptide; it reads MGKLRPGRVEWLASGHTERPHLFQNLLLFLWALLNCGLGVSA. One can recognise a TSP type-1 domain in the interval 45–97; it reads PGEWTPWVSWTRCSSSCGRGVSVRSRRCLRLPGEEPCWGDSHEYRLCQLPDCP. 3 disulfides stabilise this stretch: C57–C91, C61–C96, and C72–C81. N-linked (GlcNAc...) asparagine glycosylation occurs at N218. The tract at residues 331–361 is disordered; the sequence is QPQPRGVEPQPPAAPAVTPAQTPTLAPDPCP. The span at 345–355 shows a compositional bias: low complexity; the sequence is PAVTPAQTPTL. Intrachain disulfides connect C360-C425, C363-C427, and C377-C479. The NTR domain occupies 360-479; sequence CPPCPDTRGR…SRIRLTARRC (120 aa).

In terms of assembly, interacts with heparin, FBN1 and FBN2. Proteolytically cleaved to release a C-terminal fragment containing the NTR domain. Post-translationally, contains at least one additional N-linked glycosylation site.

It is found in the secreted. Its subcellular location is the extracellular space. The protein localises to the extracellular matrix. May play a role in modulation of fibrillin microfibrils in the extracellular matrix (ECM). This is ADAMTS-like protein 5 (ADAMTSL5) from Homo sapiens (Human).